Reading from the N-terminus, the 546-residue chain is CTP synthase (546 aa).

Residues 1–269 form an amidoligase domain region; that stretch reads MNSNTKIIFV…DAKLVELLNL (269 aa). S16 contributes to the CTP binding site. A UTP-binding site is contributed by S16. ATP-binding positions include 17 to 22 and D74; that span reads SLGKGV. Mg(2+) is bound by residues D74 and E143. CTP is bound by residues 150–152, 190–195, and K226; these read DIE and KTKPTQ. Residues 190-195 and K226 contribute to the UTP site; that span reads KTKPTQ. The region spanning 294–546 is the Glutamine amidotransferase type-1 domain; the sequence is TIAMVGKYVS…IQAAIENSNN (253 aa). Residue G356 participates in L-glutamine binding. C383 (nucleophile; for glutamine hydrolysis) is an active-site residue. L-glutamine is bound by residues 384–387, E407, and R474; that span reads LGMQ. Catalysis depends on residues H519 and E521.

The protein belongs to the CTP synthase family. Homotetramer.

The catalysed reaction is UTP + L-glutamine + ATP + H2O = CTP + L-glutamate + ADP + phosphate + 2 H(+). It catalyses the reaction L-glutamine + H2O = L-glutamate + NH4(+). It carries out the reaction UTP + NH4(+) + ATP = CTP + ADP + phosphate + 2 H(+). It participates in pyrimidine metabolism; CTP biosynthesis via de novo pathway; CTP from UDP: step 2/2. With respect to regulation, allosterically activated by GTP, when glutamine is the substrate; GTP has no effect on the reaction when ammonia is the substrate. The allosteric effector GTP functions by stabilizing the protein conformation that binds the tetrahedral intermediate(s) formed during glutamine hydrolysis. Inhibited by the product CTP, via allosteric rather than competitive inhibition. Its function is as follows. Catalyzes the ATP-dependent amination of UTP to CTP with either L-glutamine or ammonia as the source of nitrogen. Regulates intracellular CTP levels through interactions with the four ribonucleotide triphosphates. The chain is CTP synthase from Francisella tularensis subsp. mediasiatica (strain FSC147).